The chain runs to 156 residues: Transthyretin-like protein 1 (156 aa).

An N-terminal signal peptide occupies residues 1–17 (MKIALSFLFLTSTFSNA). N151 is a glycosylation site (N-linked (GlcNAc...) asparagine).

Belongs to the nematode transthyretin-like family.

It localises to the secreted. This chain is Transthyretin-like protein 1 (ttr-1), found in Caenorhabditis elegans.